Consider the following 504-residue polypeptide: ATP synthase subunit alpha, chloroplastic (504 aa).

Residue G170–T177 participates in ATP binding.

This sequence belongs to the ATPase alpha/beta chains family. As to quaternary structure, F-type ATPases have 2 components, CF(1) - the catalytic core - and CF(0) - the membrane proton channel. CF(1) has five subunits: alpha(3), beta(3), gamma(1), delta(1), epsilon(1). CF(0) has four main subunits: a, b, b' and c.

The protein localises to the plastid. Its subcellular location is the chloroplast thylakoid membrane. The enzyme catalyses ATP + H2O + 4 H(+)(in) = ADP + phosphate + 5 H(+)(out). Its function is as follows. Produces ATP from ADP in the presence of a proton gradient across the membrane. The alpha chain is a regulatory subunit. The chain is ATP synthase subunit alpha, chloroplastic from Jasminum nudiflorum (Winter jasmine).